The sequence spans 213 residues: Phosphoribosyl-dephospho-CoA transferase (213 aa).

Residues aspartate 135 and aspartate 137 contribute to the active site.

The protein belongs to the MdcG family.

The catalysed reaction is apo-[malonate decarboxylase ACP] + 2'-(5''-triphospho-alpha-D-ribosyl)-3'-dephospho-CoA = holo-[malonate decarboxylase ACP] + diphosphate. Transfers 2'-(5-triphosphoribosyl)-3'-dephosphocoenzyme-A to the apo-[acyl-carrier-protein] of the malonate decarboxylase to yield holo-[acyl-carrier-protein]. The polypeptide is Phosphoribosyl-dephospho-CoA transferase (Xanthomonas campestris pv. campestris (strain ATCC 33913 / DSM 3586 / NCPPB 528 / LMG 568 / P 25)).